The chain runs to 852 residues: Disks large homolog 2 (852 aa).

S-palmitoyl cysteine attachment occurs at residues cysteine 5 and cysteine 7. A Phosphoserine modification is found at serine 28. Residue tyrosine 58 is modified to Phosphotyrosine. Serine 65 is subject to Phosphoserine. 2 PDZ domains span residues 98–184 (EITL…VRRR) and 193–279 (EIKL…VGKP). Serine 307, serine 328, serine 360, serine 365, serine 406, and serine 414 each carry phosphoserine. The region spanning 421–501 (KVVLHKGSTG…QTVTIIAQYQ (81 aa)) is the PDZ 3 domain. At tyrosine 505 the chain carries Phosphotyrosine. Phosphoserine occurs at positions 528, 530, and 553. The 71-residue stretch at 536-606 (KRSLYVRAMF…PSKRRVERKE (71 aa)) folds into the SH3 domain. Residues 662-837 (TRPVIILGPM…IYNQCKLVIE (176 aa)) enclose the Guanylate kinase-like domain. 2 positions are modified to phosphotyrosine: tyrosine 732 and tyrosine 737.

This sequence belongs to the MAGUK family. In terms of assembly, interacts through its PDZ domains with NETO1. Interacts with NOS1/nNOS through second PDZ domain. Interacts with KCNJ2/Kir2.1 (via C-terminus) through one of its PDZ domains. Interacts with KCNJ4. Interacts with FRMPD4 (via C-terminus). Interacts with LRFN1. Interacts with LRFN2 and LRFN4. Interacts with FASLG. Interacts with ADAM22. Interacts with DGKI (via PDZ-binding motif). Palmitoylation of isoform 1 and isoform 2 is not required for targeting to postsynaptic density. As to expression, detected in juxtaparanodal zones in the central nervous system and at nerve terminal plexuses of basket cells in the cerebellum (at protein level). Brain. High levels in cerebellar Purkinje cells. Expressed in pyramidal cells of the Ammons's horn and granular cells of the dentate gyrus in the hippocampus as well as cerebral cortex and striatum. High levels in dorsal horn of spinal cord.

The protein resides in the cell membrane. The protein localises to the postsynaptic density. Its subcellular location is the synapse. It localises to the cell projection. It is found in the axon. The protein resides in the membrane. The protein localises to the perikaryon. Required for perception of chronic pain through NMDA receptor signaling. Regulates surface expression of NMDA receptors in dorsal horn neurons of the spinal cord. Interacts with the cytoplasmic tail of NMDA receptor subunits as well as inward rectifying potassium channels. Involved in regulation of synaptic stability at cholinergic synapses. Part of the postsynaptic protein scaffold of excitatory synapses. The protein is Disks large homolog 2 (Dlg2) of Rattus norvegicus (Rat).